Here is a 124-residue protein sequence, read N- to C-terminus: Trophoblast-specific protein alpha (124 aa).

Residues 1 to 18 (MTPTIFLVILCLGVASAV) form the signal peptide. 2 disordered regions span residues 51-74 (KLHS…SGQL) and 91-124 (FEEE…NQPQ). Positions 62 to 74 (EGSNIEMSASGQL) are enriched in polar residues. Positions 103 to 112 (DDPEFEDYTE) are enriched in acidic residues.

It is found in the secreted. It localises to the extracellular space. Its function is as follows. It may be a growth factor/hormone, perhaps involved in interaction between the maternal and fetal systems in maintenance of pregnancy. In Mus musculus (Mouse), this protein is Trophoblast-specific protein alpha (Tpbpa).